We begin with the raw amino-acid sequence, 132 residues long: Small ribosomal subunit protein uS8 (132 aa).

The protein belongs to the universal ribosomal protein uS8 family. Part of the 30S ribosomal subunit. Contacts proteins S5 and S12.

Its function is as follows. One of the primary rRNA binding proteins, it binds directly to 16S rRNA central domain where it helps coordinate assembly of the platform of the 30S subunit. The polypeptide is Small ribosomal subunit protein uS8 (Streptococcus sanguinis (strain SK36)).